We begin with the raw amino-acid sequence, 302 residues long: Glycine--tRNA ligase alpha subunit (302 aa).

It belongs to the class-II aminoacyl-tRNA synthetase family. Tetramer of two alpha and two beta subunits.

Its subcellular location is the cytoplasm. The enzyme catalyses tRNA(Gly) + glycine + ATP = glycyl-tRNA(Gly) + AMP + diphosphate. The protein is Glycine--tRNA ligase alpha subunit (glyQ) of Haemophilus influenzae (strain ATCC 51907 / DSM 11121 / KW20 / Rd).